We begin with the raw amino-acid sequence, 60 residues long: Sperm protamine P1 (60 aa).

The tract at residues 1-60 (MARYRHSRSRSRSRYQRRRRRRSRYRSQRRRYRRRRGSRRRRRRGRRRGYRRRYSRRRRY) is disordered.

This sequence belongs to the protamine P1 family. In terms of tissue distribution, testis.

Its subcellular location is the nucleus. The protein resides in the chromosome. In terms of biological role, protamines substitute for histones in the chromatin of sperm during the haploid phase of spermatogenesis. They compact sperm DNA into a highly condensed, stable and inactive complex. This chain is Sperm protamine P1 (PRM1), found in Phascolarctos cinereus (Koala).